A 520-amino-acid polypeptide reads, in one-letter code: Protein root UVB sensitive 4 (520 aa).

A run of 2 helical transmembrane segments spans residues 275–295 and 301–321; these read IQTV…NMLF and LQAC…LLGI.

The protein belongs to the RUS1 family.

It localises to the membrane. The protein is Protein root UVB sensitive 4 of Arabidopsis thaliana (Mouse-ear cress).